A 1402-amino-acid chain; its full sequence is Baculoviral IAP repeat-containing protein 1g (1402 aa).

BIR repeat units lie at residues 60–127, 159–227, and 278–345; these read EAKR…CEFL, EEAR…CEFL, and EELR…CVFL. Zn(2+)-binding residues include Cys315, Cys318, His335, and Cys342. The region spanning 464–759 is the NACHT domain; that stretch reads SVMCVEGEAG…EFLAAVRLTE (296 aa). Lys476 contacts ATP.

Functionally, prevents motor-neuron apoptosis induced by a variety of signals. The polypeptide is Baculoviral IAP repeat-containing protein 1g (Naip7) (Mus musculus (Mouse)).